The chain runs to 126 residues: MPEPTKSAPAPKKGSKKAVTKAQKKDGKKRKRSRKESYSVYVYKVLKQVHPDTGISSKAMGIMNSFVNDIFERIAGEASRLAHYNKRSTITSREIQTAVRLLLPGELAKHAVSEGTKAVTKYTSSK.

Over residues 1 to 12 the composition is skewed to low complexity; it reads MPEPTKSAPAPK. The disordered stretch occupies residues 1–36; it reads MPEPTKSAPAPKKGSKKAVTKAQKKDGKKRKRSRKE. An N-acetylproline modification is found at P2. The residue at position 3 (E3) is an ADP-ribosyl glutamic acid. K6 bears the N6-(2-hydroxyisobutyryl)lysine; alternate mark. N6-(beta-hydroxybutyryl)lysine; alternate is present on K6. K6 carries the post-translational modification N6-acetyllysine; alternate. K6 carries the N6-butyryllysine; alternate modification. K6 carries the N6-crotonyllysine; alternate modification. N6-lactoyllysine; alternate is present on K6. K6 participates in a covalent cross-link: Glycyl lysine isopeptide (Lys-Gly) (interchain with G-Cter in SUMO2); alternate. S7 carries the post-translational modification ADP-ribosylserine. The residue at position 12 (K12) is an N6-(beta-hydroxybutyryl)lysine; alternate. 2 positions are modified to N6-acetyllysine; alternate: K12 and K13. An N6-crotonyllysine; alternate mark is found at K12 and K13. Position 12 is an N6-lactoyllysine; alternate (K12). K13 is subject to N6-(2-hydroxyisobutyryl)lysine; alternate. S15 is subject to Phosphoserine; by STK4/MST1. N6-acetyllysine; alternate occurs at positions 16, 17, 21, and 24. Residues K16, K17, K21, and K24 each carry the N6-crotonyllysine; alternate modification. Residues K16, K17, K21, and K24 each carry the N6-lactoyllysine; alternate modification. N6-(beta-hydroxybutyryl)lysine; alternate is present on residues K17 and K21. Residue K17 is modified to N6-glutaryllysine; alternate. N6-(2-hydroxyisobutyryl)lysine; alternate is present on residues K21 and K24. K21 carries the post-translational modification N6-butyryllysine; alternate. K21 is covalently cross-linked (Glycyl lysine isopeptide (Lys-Gly) (interchain with G-Cter in SUMO2); alternate). An N6-(2-hydroxyisobutyryl)lysine modification is found at K25. Residue K35 is modified to N6-(2-hydroxyisobutyryl)lysine; alternate. Position 35 is an N6-(beta-hydroxybutyryl)lysine; alternate (K35). An N6-crotonyllysine; alternate modification is found at K35. K35 is subject to N6-glutaryllysine; alternate. K35 is modified (N6-succinyllysine; alternate). Residue K35 forms a Glycyl lysine isopeptide (Lys-Gly) (interchain with G-Cter in ubiquitin); alternate linkage. E36 is modified (polyADP-ribosyl glutamic acid). The residue at position 37 (S37) is a Phosphoserine; by AMPK. N6-(2-hydroxyisobutyryl)lysine; alternate is present on residues K44, K47, and K58. The residue at position 44 (K44) is an N6-lactoyllysine; alternate. N6-glutaryllysine; alternate occurs at positions 44 and 47. Residue K47 is modified to N6-methyllysine; alternate. An N6,N6-dimethyllysine; alternate modification is found at K58. Dimethylated arginine is present on R80. The residue at position 86 (K86) is an N6-(2-hydroxyisobutyryl)lysine; alternate. K86 carries the N6-(beta-hydroxybutyryl)lysine; alternate modification. K86 is subject to N6-acetyllysine; alternate. Position 86 is an N6-lactoyllysine; alternate (K86). K86 bears the N6,N6,N6-trimethyllysine; alternate mark. Residues R87 and R93 each carry the omega-N-methylarginine modification. An N6-(2-hydroxyisobutyryl)lysine; alternate modification is found at K109. K109 is modified (N6-lactoyllysine; alternate). K109 bears the N6-glutaryllysine; alternate mark. The residue at position 109 (K109) is an N6-methyllysine; alternate. O-linked (GlcNAc) serine glycosylation occurs at S113. Residue T116 is modified to Phosphothreonine. An N6-(2-hydroxyisobutyryl)lysine; alternate mark is found at K117 and K121. N6-(beta-hydroxybutyryl)lysine; alternate occurs at positions 117 and 121. 2 positions are modified to N6-lactoyllysine; alternate: K117 and K121. N6-glutaryllysine; alternate is present on residues K117 and K121. 2 positions are modified to N6-succinyllysine; alternate: K117 and K121. K117 carries the N6-malonyllysine; alternate modification. At K117 the chain carries N6-methylated lysine; alternate. K121 is covalently cross-linked (Glycyl lysine isopeptide (Lys-Gly) (interchain with G-Cter in ubiquitin); alternate).

The protein belongs to the histone H2B family. The nucleosome is a histone octamer containing two molecules each of H2A, H2B, H3 and H4 assembled in one H3-H4 heterotetramer and two H2A-H2B heterodimers. The octamer wraps approximately 147 bp of DNA. Post-translationally, monoubiquitination at Lys-35 (H2BK34Ub) by the MSL1/MSL2 dimer is required for histone H3 'Lys-4' (H3K4me) and 'Lys-79' (H3K79me) methylation and transcription activation at specific gene loci, such as HOXA9 and MEIS1 loci. Similarly, monoubiquitination at Lys-121 (H2BK120Ub) by the RNF20/40 complex gives a specific tag for epigenetic transcriptional activation and is also prerequisite for histone H3 'Lys-4' and 'Lys-79' methylation. It also functions cooperatively with the FACT dimer to stimulate elongation by RNA polymerase II. H2BK120Ub also acts as a regulator of mRNA splicing: deubiquitination by USP49 is required for efficient cotranscriptional splicing of a large set of exons. In terms of processing, phosphorylation at Ser-37 (H2BS36ph) by AMPK in response to stress promotes transcription. Phosphorylated on Ser-15 (H2BS14ph) by STK4/MST1 during apoptosis; which facilitates apoptotic chromatin condensation. Also phosphorylated on Ser-15 in response to DNA double strand breaks (DSBs), and in correlation with somatic hypermutation and immunoglobulin class-switch recombination. GlcNAcylation at Ser-113 promotes monoubiquitination of Lys-121. It fluctuates in response to extracellular glucose, and associates with transcribed genes. Post-translationally, ADP-ribosylated by PARP1 or PARP2 on Ser-7 (H2BS6ADPr) in response to DNA damage. H2BS6ADPr promotes recruitment of CHD1L. Mono-ADP-ribosylated on Glu-3 (H2BE2ADPr) by PARP3 in response to single-strand breaks. Poly ADP-ribosylation on Glu-36 (H2BE35ADPr) by PARP1 regulates adipogenesis: it inhibits phosphorylation at Ser-37 (H2BS36ph), thereby blocking expression of pro-adipogenetic genes. In terms of processing, crotonylation (Kcr) is specifically present in male germ cells and marks testis-specific genes in post-meiotic cells, including X-linked genes that escape sex chromosome inactivation in haploid cells. Crotonylation marks active promoters and enhancers and confers resistance to transcriptional repressors. It is also associated with post-meiotically activated genes on autosomes. Lactylated in macrophages by EP300/P300 by using lactoyl-CoA directly derived from endogenous or exogenous lactate, leading to stimulates gene transcription.

Its subcellular location is the nucleus. It is found in the chromosome. Its function is as follows. Core component of nucleosome. Nucleosomes wrap and compact DNA into chromatin, limiting DNA accessibility to the cellular machineries which require DNA as a template. Histones thereby play a central role in transcription regulation, DNA repair, DNA replication and chromosomal stability. DNA accessibility is regulated via a complex set of post-translational modifications of histones, also called histone code, and nucleosome remodeling. In Homo sapiens (Human), this protein is Histone H2B type 1-D.